The sequence spans 706 residues: Zinc finger CCCH domain-containing protein 56 (706 aa).

2 ANK repeats span residues 83–113 and 118–150; these read EQRTPLMVASLYGSLDVVKFILSFPEAELNL and DKSTALHCAASGASVNSLDVVKLLLSVGADPNI. A compositionally biased stretch (low complexity) spans 211 to 221; the sequence is SSLLSLDSVSS. The tract at residues 211-235 is disordered; that stretch reads SSLLSLDSVSSPTKPHGTDVTFASE. 2 C3H1-type zinc fingers span residues 302–324 and 332–356; these read PCPDFKKGSCKQGDMCEYAHGVF and QYRTRLCKDGMGCNRRVCFFAHANE. 3 disordered regions span residues 396 to 427, 545 to 616, and 652 to 692; these read PSAAQHSFTPPISPSGNGSMPHSSMGWPQQNI, SPKN…QTHG, and QMLK…TRES. Composition is skewed to polar residues over residues 397–427 and 545–560; these read SAAQHSFTPPISPSGNGSMPHSSMGWPQQNI and SPKNVEQHSLLQQASS. Residue Ser-568 is modified to Phosphoserine. Positions 580–592 are enriched in low complexity; that stretch reads SRSLSSRDFGSSL. 3 stretches are compositionally biased toward polar residues: residues 600 to 616, 652 to 667, and 677 to 686; these read DSGSPLSPWSSWDQTHG, QMLKDSSSPRNGNRVV, and QGGSSVNPHN.

The protein is Zinc finger CCCH domain-containing protein 56 of Arabidopsis thaliana (Mouse-ear cress).